Reading from the N-terminus, the 426-residue chain is MGEPGQSPSPRSSHGSPPTLSTLTLLLLLCGHAHSQCKILRCNAEYVSSTLSLRGGGSSGALRGGGGGGRGGGVGSGGLCRALRSYALCTRRTARTCRGDLAFHSAVHGIEDLMIQHNCSRQGPTAPPPPRGPALPGAGSGLPAPDPCDYEGRFSRLHGRPPGFLHCASFGDPHVRSFHHHFHTCRVQGAWPLLDNDFLFVQATSSPMALGANATATRKLTIIFKNMQECIDQKVYQAEVDNLPVAFEDGSINGGDRPGGSSLSIQTANPGNHVEIQAAYIGTTIIIRQTAGQLSFSIKVAEDVAMAFSAEQDLQLCVGGCPPSQRLSRSERNRRGAITIDTARRLCKEGLPVEDAYFHSCVFDVLISGDPNFTVAAQAALEDARAFLPDLEKLHLFPSDAGVPLSSATLLAPLLSGLFVLWLCIQ.

The first 35 residues, 1 to 35 (MGEPGQSPSPRSSHGSPPTLSTLTLLLLLCGHAHS), serve as a signal peptide directing secretion. A Phosphotyrosine modification is found at Y46. The N-linked (GlcNAc...) asparagine glycan is linked to N118. A disordered region spans residues 119 to 142 (CSRQGPTAPPPPRGPALPGAGSGL). Cystine bridges form between C148–C230 and C167–C317. N213 and N372 each carry an N-linked (GlcNAc...) asparagine glycan. The GPI-anchor amidated aspartate moiety is linked to residue D400. Residues 401-426 (AGVPLSSATLLAPLLSGLFVLWLCIQ) constitute a propeptide, removed in mature form.

Belongs to the repulsive guidance molecule (RGM) family. Interacts with BMP2 and BMP4. Interacts with BMP6. Interacts with BMPR1B. Interacts with TMPRSS6. Post-translationally, autocatalytically cleaved at low pH; the two chains remain linked via two disulfide bonds. Also proteolytically processed by TMPRSS6, several fragments being released in the extracellular space; regulates HJV activity in BMP signaling and thefore iron homeostasis. Adult and fetal liver, heart, and skeletal muscle.

It is found in the cell membrane. Functionally, acts as a bone morphogenetic protein (BMP) coreceptor. Through enhancement of BMP signaling regulates hepcidin (HAMP) expression and regulates iron homeostasis. This Homo sapiens (Human) protein is Hemojuvelin.